Reading from the N-terminus, the 322-residue chain is Ribosomal RNA large subunit methyltransferase F (322 aa).

It belongs to the methyltransferase superfamily. METTL16/RlmF family.

It localises to the cytoplasm. The enzyme catalyses adenosine(1618) in 23S rRNA + S-adenosyl-L-methionine = N(6)-methyladenosine(1618) in 23S rRNA + S-adenosyl-L-homocysteine + H(+). Its function is as follows. Specifically methylates the adenine in position 1618 of 23S rRNA. This Cytophaga hutchinsonii (strain ATCC 33406 / DSM 1761 / CIP 103989 / NBRC 15051 / NCIMB 9469 / D465) protein is Ribosomal RNA large subunit methyltransferase F.